A 376-amino-acid chain; its full sequence is Actin-like protein 53D (376 aa).

Residues methionine 1–isoleucine 40 form a necessary and sufficient for recruitment to the fusome and actin cones of spermatocyte cysts region.

The protein belongs to the actin family. ARP1 subfamily. As to expression, high expression in males whereas expression in females is very low. In adult males, highest levels of expression are in the testis. In adult females, expressed only in the ovaries at very low levels. In larvae, highly expressed in the imaginal disk whereas in prepupae and pupae modest levels of expression occur in the fat body.

Its subcellular location is the cytoplasm. The protein localises to the cytoskeleton. Required for optimal embryo development, particularly under heat stress conditions. Also appears to have a role in negatively regulating spermatocyte cyst development. Under heat stress conditions, required for the correct organization and migration of nuclei during early embryogenesis, and therefore possibly functions by regulating embryonic actin networks during the heat stress response. This Drosophila melanogaster (Fruit fly) protein is Actin-like protein 53D.